The sequence spans 208 residues: Thymidylate kinase (208 aa).

An ATP-binding site is contributed by 10–17; the sequence is GLEGAGKT.

It belongs to the thymidylate kinase family.

It catalyses the reaction dTMP + ATP = dTDP + ADP. Functionally, phosphorylation of dTMP to form dTDP in both de novo and salvage pathways of dTTP synthesis. The sequence is that of Thymidylate kinase from Actinobacillus pleuropneumoniae serotype 5b (strain L20).